Reading from the N-terminus, the 250-residue chain is 3-deoxy-manno-octulosonate cytidylyltransferase (250 aa).

It belongs to the KdsB family.

It is found in the cytoplasm. It catalyses the reaction 3-deoxy-alpha-D-manno-oct-2-ulosonate + CTP = CMP-3-deoxy-beta-D-manno-octulosonate + diphosphate. It functions in the pathway nucleotide-sugar biosynthesis; CMP-3-deoxy-D-manno-octulosonate biosynthesis; CMP-3-deoxy-D-manno-octulosonate from 3-deoxy-D-manno-octulosonate and CTP: step 1/1. The protein operates within bacterial outer membrane biogenesis; lipopolysaccharide biosynthesis. Its function is as follows. Activates KDO (a required 8-carbon sugar) for incorporation into bacterial lipopolysaccharide in Gram-negative bacteria. This is 3-deoxy-manno-octulosonate cytidylyltransferase from Xanthomonas campestris pv. campestris (strain 8004).